The primary structure comprises 84 residues: Protein myomixer (84 aa).

Over 1-4 (MPTP) the chain is Cytoplasmic. The helical transmembrane segment at 5–25 (LLPLLLRLLLSCLLLPAARLA) threads the bilayer. Residues 26 to 84 (RQYLLPLLRRLARRLGSQDMREALLGCLLFILSQRHSPDAGEASRVDRLERRERLGPQK) lie on the Extracellular side of the membrane. Residues 48 to 57 (ALLGCLLFIL) carry the AxLyCxL motif. The segment at 62-84 (SPDAGEASRVDRLERRERLGPQK) is disordered.

It belongs to the MYMX family. In terms of assembly, interacts with MYMK.

Its subcellular location is the cell membrane. Functionally, myoblast-specific protein that mediates myoblast fusion, an essential step for the formation of multi-nucleated muscle fibers. Involved in membrane fusion downstream of the lipid mixing step mediated by MYMK. Acts by generating membrane stresses via its extracellular C-terminus, leading to drive fusion pore formation. Acts independently of MYMK. Involved in skeletal muscle regeneration in response to injury by mediating the fusion of satellite cells, a population of muscle stem cells, with injured myofibers. The sequence is that of Protein myomixer from Homo sapiens (Human).